The primary structure comprises 295 residues: tRNA(Ile)-lysidine synthase (295 aa).

An ATP-binding site is contributed by Ser10 to Ser15.

The protein belongs to the tRNA(Ile)-lysidine synthase family.

The protein resides in the cytoplasm. The enzyme catalyses cytidine(34) in tRNA(Ile2) + L-lysine + ATP = lysidine(34) in tRNA(Ile2) + AMP + diphosphate + H(+). Its function is as follows. Ligates lysine onto the cytidine present at position 34 of the AUA codon-specific tRNA(Ile) that contains the anticodon CAU, in an ATP-dependent manner. Cytidine is converted to lysidine, thus changing the amino acid specificity of the tRNA from methionine to isoleucine. The polypeptide is tRNA(Ile)-lysidine synthase (Malacoplasma penetrans (strain HF-2) (Mycoplasma penetrans)).